The chain runs to 150 residues: UPF0178 protein DMR_20710 (150 aa).

The protein belongs to the UPF0178 family.

The polypeptide is UPF0178 protein DMR_20710 (Solidesulfovibrio magneticus (strain ATCC 700980 / DSM 13731 / RS-1) (Desulfovibrio magneticus)).